An 843-amino-acid polypeptide reads, in one-letter code: DNA helicase MCM8 (843 aa).

Residues M1–R23 show a composition bias toward gly residues. The tract at residues M1–P52 is disordered. The region spanning L394–V601 is the MCM domain. G446–S453 contacts ATP.

The protein belongs to the MCM family. In terms of assembly, component of the MCM8-MCM9 complex, which forms a hexamer composed of mcm8 and mcm9.

Its subcellular location is the nucleus. The enzyme catalyses ATP + H2O = ADP + phosphate + H(+). In terms of biological role, component of the MCM8-MCM9 complex, a complex involved in homologous recombination repair following DNA interstrand cross-links and plays a key role during gametogenesis. The MCM8-MCM9 complex probably acts as a hexameric helicase required to process aberrant forks into homologous recombination substrates and to orchestrate homologous recombination with resection, fork stabilization and fork restart. In eggs, required for elongation during DNA replication by facilitating the recruitment of rpa2/rpa34 and stimulating the processivity of DNA polymerases at replication foci. Probably not required for DNA replication in other cells. This chain is DNA helicase MCM8 (mcm8), found in Xenopus tropicalis (Western clawed frog).